A 370-amino-acid chain; its full sequence is Small ribosomal subunit biogenesis GTPase RsgA (370 aa).

A CP-type G domain is found at 111 to 270 (RSEGQILAAN…LIDTPGLRGV (160 aa)). GTP is bound by residues 158–161 (TKAD) and 212–220 (GQSGAGKST). Zn(2+) contacts are provided by cysteine 293, cysteine 298, histidine 300, and cysteine 306.

Belongs to the TRAFAC class YlqF/YawG GTPase family. RsgA subfamily. In terms of assembly, monomer. Associates with 30S ribosomal subunit, binds 16S rRNA. Zn(2+) is required as a cofactor.

The protein resides in the cytoplasm. In terms of biological role, one of several proteins that assist in the late maturation steps of the functional core of the 30S ribosomal subunit. Helps release RbfA from mature subunits. May play a role in the assembly of ribosomal proteins into the subunit. Circularly permuted GTPase that catalyzes slow GTP hydrolysis, GTPase activity is stimulated by the 30S ribosomal subunit. This is Small ribosomal subunit biogenesis GTPase RsgA from Streptomyces avermitilis (strain ATCC 31267 / DSM 46492 / JCM 5070 / NBRC 14893 / NCIMB 12804 / NRRL 8165 / MA-4680).